The sequence spans 202 residues: Endothelin-1 (202 aa).

Residues 1–25 form the signal peptide; it reads MDYFPMIFALLFVAFQGAPEAAVLG. A propeptide spanning residues 26–50 is cleaved from the precursor; it reads TELSAGAEDGGEKPAPATPWRPRRS. 2 disulfide bridges follow: C53–C67 and C55–C63. The propeptide occupies 74-202; sequence VNTPEHVVPY…DKKVIYNRAH (129 aa). Residues 110–124 are endothelin-like; that stretch reads CQCASQTDKKCWNFC.

The protein belongs to the endothelin/sarafotoxin family.

The protein resides in the secreted. Functionally, endothelins are endothelium-derived vasoconstrictor peptides. Probable ligand for G-protein coupled receptors EDNRA and EDNRB which activates PTK2B, BCAR1, BCAR3 and, GTPases RAP1 and RHOA cascade in glomerular mesangial cells. Also binds the DEAR/FBXW7-AS1 receptor. Promotes mesenteric arterial wall remodeling via activation of ROCK signaling and subsequent colocalization of NFATC3 with F-actin filaments. NFATC3 then translocates to the nucleus where it subsequently promotes the transcription of the smooth muscle hypertrophy and differentiation marker ACTA2. In Bos taurus (Bovine), this protein is Endothelin-1 (EDN1).